The following is a 462-amino-acid chain: Cytochrome P450 20A1 (462 aa).

A helical membrane pass occupies residues 4–24; sequence FAIFAVTFLLALVGAVLYLYP. A heme-binding site is contributed by Cys-409.

Belongs to the cytochrome P450 family. The cofactor is heme.

It is found in the membrane. This chain is Cytochrome P450 20A1 (CYP20A1), found in Homo sapiens (Human).